A 290-amino-acid polypeptide reads, in one-letter code: Iron-sulfur cluster carrier protein (290 aa).

Gly47–Ser54 contributes to the ATP binding site.

It belongs to the Mrp/NBP35 ATP-binding proteins family. As to quaternary structure, homodimer.

Functionally, binds and transfers iron-sulfur (Fe-S) clusters to target apoproteins. Can hydrolyze ATP. This chain is Iron-sulfur cluster carrier protein, found in Methanocaldococcus jannaschii (strain ATCC 43067 / DSM 2661 / JAL-1 / JCM 10045 / NBRC 100440) (Methanococcus jannaschii).